We begin with the raw amino-acid sequence, 146 residues long: Chorion class A protein Ld3/Ld29 (146 aa).

The N-terminal stretch at 1–21 (MNTFALLSVFIQACLVQSVFS) is a signal peptide.

This sequence belongs to the chorion protein family.

Its function is as follows. This protein is one of many from the eggshell of the gypsy moth. The polypeptide is Chorion class A protein Ld3/Ld29 (Lymantria dispar (Gypsy moth)).